A 410-amino-acid polypeptide reads, in one-letter code: Gamma-glutamyl phosphate reductase (410 aa).

It belongs to the gamma-glutamyl phosphate reductase family.

The protein localises to the cytoplasm. It carries out the reaction L-glutamate 5-semialdehyde + phosphate + NADP(+) = L-glutamyl 5-phosphate + NADPH + H(+). It functions in the pathway amino-acid biosynthesis; L-proline biosynthesis; L-glutamate 5-semialdehyde from L-glutamate: step 2/2. Its function is as follows. Catalyzes the NADPH-dependent reduction of L-glutamate 5-phosphate into L-glutamate 5-semialdehyde and phosphate. The product spontaneously undergoes cyclization to form 1-pyrroline-5-carboxylate. The chain is Gamma-glutamyl phosphate reductase from Sulfurimonas denitrificans (strain ATCC 33889 / DSM 1251) (Thiomicrospira denitrificans (strain ATCC 33889 / DSM 1251)).